The sequence spans 134 residues: MGAQKTIAYLAIIAIAVIFAQVNTAPPVGHYAANNTNKSHNLVVGYRMPGDRLVLRQSVIKNSSWGRIVVEERTFNVSSWERITMIQALDQKTNGNGAYASITNGGPGNQNVTIRLKSQRGHGINFVIEIYSRY.

An N-terminal signal peptide occupies residues 1-24; it reads MGAQKTIAYLAIIAIAVIFAQVNT.

The protein localises to the secreted. The polypeptide is Probable salivary secreted peptide (Bombus ignitus (Bumblebee)).